The sequence spans 310 residues: Zinc finger protein unc-98 (310 aa).

Over residues Gly73–Ser84 the composition is skewed to polar residues. The interval Gly73–Ser102 is disordered. 2 C2H2-type zinc fingers span residues Tyr113 to His135 and Tyr141 to His163. The C2H2-type 3; degenerate zinc finger occupies Tyr169–His188. An interaction with myo-3 region spans residues Ala198–Phe310. The segment at Tyr246–His268 adopts a C2H2-type 4 zinc-finger fold.

As to quaternary structure, interacts with hum-6, mep-1, myo-3, unc-96 and unc-97/PINCH. Expressed in embryos from 1.5- to 2-fold stage in myofibrils. In larvae and adults, it is expressed in body wall muscle, and in addition, anal depressor muscle and vulval muscles. More specifically it is found in the thick filaments of muscle fibers.

It is found in the nucleus. The protein resides in the cytoplasm. In terms of biological role, probable transcription factor required for muscle structure. Its dual subcellular localization suggests that it may function both as a muscle adhesion complex protein and as a transcription factor, or work together with transcription factors, to influence gene expression. Thought to act as a molecular bridge between unc-97 and myo-3 at the M-line of muscles, possibly in a signaling role. Plays a role in the formation of muscle connections, also called muscle arm extensions, between the body wall and the motor axons in the dorsal and ventral cord. The chain is Zinc finger protein unc-98 (unc-98) from Caenorhabditis elegans.